A 773-amino-acid chain; its full sequence is Glucan endo-1,3-beta-D-glucosidase (773 aa).

A beta-sandwich subdomain region spans residues Met1–Pro194. The region spanning Met1 to Gly647 is the GH81 domain. Mg(2+) is bound by residues Ile31, Asn34, Gln35, Tyr36, and Ala89. The alpha/beta subdomain stretch occupies residues Asp195–Arg288. The (alpha/beta)6 barrel subdomain stretch occupies residues Asp298 to Gly647. Positions 327 and 331 each coordinate (1,3-beta-D-glucosyl)n. Residues Asp365, Thr368, Glu373, and Lys376 each coordinate Ca(2+). The (1,3-beta-D-glucosyl)n site is built by Asp402 and His406. The active site involves Asp402. 3 residues coordinate Ca(2+): Leu454, Arg455, and Phe457. Residues Asn477, Glu479, and Glu483 each coordinate (1,3-beta-D-glucosyl)n. Catalysis depends on residues Glu479 and Glu483. Lys527, Lys618, Asn619, and Trp621 together coordinate Mg(2+). The Ca(2+) site is built by Asp712, Asn714, Asp716, Gly717, Lys718, Asp723, Asp748, Ile749, Asn750, Asp752, Lys754, and Asp759.

It belongs to the glycosyl hydrolase 81 family. Ca(2+) is required as a cofactor. It depends on Mg(2+) as a cofactor.

It localises to the secreted. The catalysed reaction is Hydrolysis of (1-&gt;3)-beta-D-glucosidic linkages in (1-&gt;3)-beta-D-glucans.. Its activity is regulated as follows. Inhibited by manganese, zinc, and copper ions. In terms of biological role, cleaves internal linkages in 1,3-beta-glucan. May contribute to plant biomass degradation. The polypeptide is Glucan endo-1,3-beta-D-glucosidase (Acetivibrio thermocellus (strain ATCC 27405 / DSM 1237 / JCM 9322 / NBRC 103400 / NCIMB 10682 / NRRL B-4536 / VPI 7372) (Clostridium thermocellum)).